The following is a 180-amino-acid chain: MNPAPNLVMVGPMGAGKSCIGRRLAERFGLEFVDVDQAIVEQVGSSIPAIFAQHGEAGFRQHEADTLQALLEQDNKLISTGGGTVLDPHNRQRICARGFVVHLHVSVPTQLTRLARDRNRPLLQRADREQLLHAMAAHRTPLYHEVADLSLETDHFSPAEATAQLVLRLAAQWRMSSAPA.

14-19 (GAGKSC) contacts ATP. Ser18 lines the Mg(2+) pocket. Substrate is bound by residues Asp36, Arg60, and Gly82. An ATP-binding site is contributed by Arg120. Arg139 lines the substrate pocket.

It belongs to the shikimate kinase family. In terms of assembly, monomer. The cofactor is Mg(2+).

Its subcellular location is the cytoplasm. It catalyses the reaction shikimate + ATP = 3-phosphoshikimate + ADP + H(+). Its pathway is metabolic intermediate biosynthesis; chorismate biosynthesis; chorismate from D-erythrose 4-phosphate and phosphoenolpyruvate: step 5/7. Catalyzes the specific phosphorylation of the 3-hydroxyl group of shikimic acid using ATP as a cosubstrate. The sequence is that of Shikimate kinase from Xanthomonas oryzae pv. oryzae (strain PXO99A).